Here is a 124-residue protein sequence, read N- to C-terminus: Holo-[acyl-carrier-protein] synthase (124 aa).

Residues D8 and E60 each coordinate Mg(2+).

This sequence belongs to the P-Pant transferase superfamily. AcpS family. Mg(2+) is required as a cofactor.

Its subcellular location is the cytoplasm. The catalysed reaction is apo-[ACP] + CoA = holo-[ACP] + adenosine 3',5'-bisphosphate + H(+). Functionally, transfers the 4'-phosphopantetheine moiety from coenzyme A to a Ser of acyl-carrier-protein. The sequence is that of Holo-[acyl-carrier-protein] synthase from Wolbachia pipientis subsp. Culex pipiens (strain wPip).